Reading from the N-terminus, the 183-residue chain is UPF0114 protein HI_0507 (183 aa).

3 consecutive transmembrane segments (helical) span residues 30–50 (LQVP…YKFI), 68–88 (IMLG…LVMV), and 150–170 (TMMW…ALAY).

It belongs to the UPF0114 family.

It is found in the cell membrane. This chain is UPF0114 protein HI_0507, found in Haemophilus influenzae (strain ATCC 51907 / DSM 11121 / KW20 / Rd).